We begin with the raw amino-acid sequence, 181 residues long: SecB-like chaperone MT2006 (181 aa).

Belongs to the SecB-like family. As to quaternary structure, homotetramer, interacts with antitoxin HigA1.

Its function is as follows. Chaperone component of an atypical, type II toxin-antitoxin chaperone (TAC) module, probably required for antitoxin HigA1 to neutralize its cognate toxin HigB1. The protein is SecB-like chaperone MT2006 (secBL) of Mycobacterium tuberculosis (strain CDC 1551 / Oshkosh).